Consider the following 876-residue polypeptide: Alanine--tRNA ligase (876 aa).

Positions 566, 570, 667, and 671 each coordinate Zn(2+).

Belongs to the class-II aminoacyl-tRNA synthetase family. Requires Zn(2+) as cofactor.

The protein localises to the cytoplasm. The enzyme catalyses tRNA(Ala) + L-alanine + ATP = L-alanyl-tRNA(Ala) + AMP + diphosphate. Catalyzes the attachment of alanine to tRNA(Ala) in a two-step reaction: alanine is first activated by ATP to form Ala-AMP and then transferred to the acceptor end of tRNA(Ala). Also edits incorrectly charged Ser-tRNA(Ala) and Gly-tRNA(Ala) via its editing domain. The polypeptide is Alanine--tRNA ligase (Albidiferax ferrireducens (strain ATCC BAA-621 / DSM 15236 / T118) (Rhodoferax ferrireducens)).